A 297-amino-acid polypeptide reads, in one-letter code: GTPase Era (297 aa).

The 169-residue stretch at 3-171 (KSGFVSIVGR…IKVIQNYLEE (169 aa)) folds into the Era-type G domain. Positions 11–18 (GRPNVGKS) are G1. 11–18 (GRPNVGKS) is a binding site for GTP. The interval 37–41 (QTTRN) is G2. Positions 58 to 61 (DTPG) are G3. GTP is bound by residues 58–62 (DTPGI) and 120–123 (NKID). The G4 stretch occupies residues 120–123 (NKID). Positions 150–152 (ISA) are G5. A KH type-2 domain is found at 194 to 280 (IREKVLHYLN…NLQLWVKVKE (87 aa)).

The protein belongs to the TRAFAC class TrmE-Era-EngA-EngB-Septin-like GTPase superfamily. Era GTPase family. Monomer.

Its subcellular location is the cytoplasm. It is found in the cell membrane. In terms of biological role, an essential GTPase that binds both GDP and GTP, with rapid nucleotide exchange. Plays a role in 16S rRNA processing and 30S ribosomal subunit biogenesis and possibly also in cell cycle regulation and energy metabolism. The sequence is that of GTPase Era from Clostridioides difficile (strain 630) (Peptoclostridium difficile).